The primary structure comprises 350 residues: Glyceraldehyde-3-phosphate dehydrogenase (350 aa).

Residues 10–11 (RI), Asp-36, Arg-82, and Ser-125 each bind NAD(+). D-glyceraldehyde 3-phosphate-binding positions include 161–163 (SCT), Thr-193, 222–223 (TG), and Arg-245. The active-site Nucleophile is Cys-162. NAD(+) is bound at residue Asn-331.

It belongs to the glyceraldehyde-3-phosphate dehydrogenase family. In terms of assembly, homotetramer.

The protein resides in the cytoplasm. The enzyme catalyses D-glyceraldehyde 3-phosphate + phosphate + NAD(+) = (2R)-3-phospho-glyceroyl phosphate + NADH + H(+). The protein operates within carbohydrate degradation; glycolysis; pyruvate from D-glyceraldehyde 3-phosphate: step 1/5. Functionally, catalyzes the oxidative phosphorylation of glyceraldehyde 3-phosphate (G3P) to 1,3-bisphosphoglycerate (BPG) using the cofactor NAD. The first reaction step involves the formation of a hemiacetal intermediate between G3P and a cysteine residue, and this hemiacetal intermediate is then oxidized to a thioester, with concomitant reduction of NAD to NADH. The reduced NADH is then exchanged with the second NAD, and the thioester is attacked by a nucleophilic inorganic phosphate to produce BPG. This is Glyceraldehyde-3-phosphate dehydrogenase (gap) from Treponema pallidum (strain Nichols).